Reading from the N-terminus, the 462-residue chain is Indoleacetamide hydrolase (462 aa).

Catalysis depends on charge relay system residues Lys74 and Ser149. Ser173 (acyl-ester intermediate) is an active-site residue.

The protein belongs to the amidase family.

The protein operates within plant hormone metabolism; auxin biosynthesis. Hydrolyzes indole-3-acetamide (IAM) into indole-3-acetic acid (IAA). The chain is Indoleacetamide hydrolase (iaaH) from Allorhizobium ampelinum (strain ATCC BAA-846 / DSM 112012 / S4) (Agrobacterium vitis (strain S4)).